We begin with the raw amino-acid sequence, 146 residues long: uncharacterized protein (146 aa).

The helical transmembrane segment at 7 to 27 (FVLSITIVLVILIIIAFIWYN) threads the bilayer.

The protein belongs to the asfivirus E146L family.

Its subcellular location is the host membrane. The protein resides in the virion. This is an uncharacterized protein from Ornithodoros (relapsing fever ticks).